The primary structure comprises 103 residues: Cobalt transport protein CbiN (103 aa).

2 helical membrane passes run 6–26 and 68–88; these read VLTNVILLLLVVFITIIPFFV and LLFALQAAIGAGVIGFGLGYL.

This sequence belongs to the CbiN family. As to quaternary structure, forms an energy-coupling factor (ECF) transporter complex composed of an ATP-binding protein (A component, CbiO), a transmembrane protein (T component, CbiQ) and 2 possible substrate-capture proteins (S components, CbiM and CbiN) of unknown stoichimetry.

The protein localises to the cell membrane. The protein operates within cofactor biosynthesis; adenosylcobalamin biosynthesis. Part of the energy-coupling factor (ECF) transporter complex CbiMNOQ involved in cobalt import. The polypeptide is Cobalt transport protein CbiN (Clostridium perfringens (strain 13 / Type A)).